We begin with the raw amino-acid sequence, 333 residues long: Galactinol synthase 5 (333 aa).

The active site involves Lys103. Residues Asp119, Asp121, and His257 each contribute to the Mn(2+) site.

Belongs to the glycosyltransferase 8 family. Galactosyltransferase subfamily. It depends on a divalent metal cation as a cofactor.

Its subcellular location is the cytoplasm. It carries out the reaction myo-inositol + UDP-alpha-D-galactose = alpha-D-galactosyl-(1-&gt;3)-1D-myo-inositol + UDP + H(+). In terms of biological role, galactinol synthase involved in the biosynthesis of raffinose family oligosaccharides (RFOs) that function as osmoprotectants. May promote plant stress tolerance. The chain is Galactinol synthase 5 (GOLS5) from Arabidopsis thaliana (Mouse-ear cress).